Here is an 815-residue protein sequence, read N- to C-terminus: Probable E3 ubiquitin-protein ligase hulA (815 aa).

The region spanning 1–112 (MGSNLPSQPN…EMGGDEMLTR (112 aa)) is the C2 domain. Disordered stretches follow at residues 134 to 237 (NLST…GWER) and 253 to 353 (RTTT…YFVD). Low complexity-rich tracts occupy residues 165-185 (ASAA…SNPS) and 202-212 (APGAAAGATPT). Composition is skewed to polar residues over residues 213–226 (NTQG…SFED) and 253–270 (RTTT…QTQR). Residues 229–262 (GRLPAGWERREDNLGRTYYVDHNTRTTTWTRPSS) form the WW 1 domain. A compositionally biased stretch (basic and acidic residues) spans 279-294 (LERRAHQSRMLPEDRT). Residues 295–308 (GANSPNLPETSQQA) are compositionally biased toward polar residues. A compositionally biased stretch (low complexity) spans 324–333 (ATGATTAGTG). WW domains lie at 333–366 (GELP…DPRR) and 393–426 (GPLP…DPRL). The HECT domain occupies 482-815 (SASDLKKRLM…VEETLGFGQE (334 aa)). Residue Cys-783 is the Glycyl thioester intermediate of the active site.

It belongs to the RSP5/NEDD4 family. As to quaternary structure, interacts with creD.

The protein resides in the cytoplasm. It carries out the reaction S-ubiquitinyl-[E2 ubiquitin-conjugating enzyme]-L-cysteine + [acceptor protein]-L-lysine = [E2 ubiquitin-conjugating enzyme]-L-cysteine + N(6)-ubiquitinyl-[acceptor protein]-L-lysine.. It functions in the pathway protein modification; protein ubiquitination. Its function is as follows. E3 ubiquitin-protein ligase which accepts ubiquitin from an E2 ubiquitin-conjugating enzyme in the form of a thioester and then directly transfers the ubiquitin to targeted substrates. Probably involved in the regulatory network controlling carbon source utilization. This is Probable E3 ubiquitin-protein ligase hulA (hulA) from Aspergillus clavatus (strain ATCC 1007 / CBS 513.65 / DSM 816 / NCTC 3887 / NRRL 1 / QM 1276 / 107).